Here is a 178-residue protein sequence, read N- to C-terminus: Transcription factor E (178 aa).

The 85-residue stretch at 5–89 (AEELILSLAK…YWKVNIDQIN (85 aa)) folds into the HTH TFE/IIEalpha-type domain.

This sequence belongs to the TFE family. Monomer. Interaction with RNA polymerase subunits RpoF and RpoE is necessary for Tfe stimulatory transcription activity. Able to interact with Tbp and RNA polymerase in the absence of DNA promoter. Interacts both with the preinitiation and elongation complexes.

In terms of biological role, transcription factor that plays a role in the activation of archaeal genes transcribed by RNA polymerase. Facilitates transcription initiation by enhancing TATA-box recognition by TATA-box-binding protein (Tbp), and transcription factor B (Tfb) and RNA polymerase recruitment. Not absolutely required for transcription in vitro, but particularly important in cases where Tbp or Tfb function is not optimal. It dynamically alters the nucleic acid-binding properties of RNA polymerases by stabilizing the initiation complex and destabilizing elongation complexes. Seems to translocate with the RNA polymerase following initiation and acts by binding to the non template strand of the transcription bubble in elongation complexes. The chain is Transcription factor E from Sulfurisphaera tokodaii (strain DSM 16993 / JCM 10545 / NBRC 100140 / 7) (Sulfolobus tokodaii).